The sequence spans 183 residues: MAMNTETLSLIKQSIKTIPNYPKEGILFRDVTSLLENATAYKATIDLLVEHYRSKGFTKIVGTEARGFLFGAPLALGLGIGFVPVRKPGKLPRATISQSYELEYGHDSLEIHTDAITANDKVLVVDDLLATGGTIEATVKLIRQLGGEVQDAAFVISLPDLGGEARLTALGLELVKLCEFEGE.

Belongs to the purine/pyrimidine phosphoribosyltransferase family. Homodimer.

It localises to the cytoplasm. It catalyses the reaction AMP + diphosphate = 5-phospho-alpha-D-ribose 1-diphosphate + adenine. Its pathway is purine metabolism; AMP biosynthesis via salvage pathway; AMP from adenine: step 1/1. Catalyzes a salvage reaction resulting in the formation of AMP, that is energically less costly than de novo synthesis. The sequence is that of Adenine phosphoribosyltransferase from Shewanella oneidensis (strain ATCC 700550 / JCM 31522 / CIP 106686 / LMG 19005 / NCIMB 14063 / MR-1).